Here is a 220-residue protein sequence, read N- to C-terminus: Protein ABA DEFICIENT 4, chloroplastic (220 aa).

The transit peptide at 1–37 (MGFSSFISQPLSSSLSVMKRNVSAKRSELCLDSSKIR) directs the protein to the chloroplast. The next 4 membrane-spanning stretches (helical) occupy residues 77 to 97 (IASS…TLMV), 112 to 132 (SVPY…SWTP), 154 to 174 (MFSS…VDLF), and 195 to 215 (SLCL…KAII).

In terms of tissue distribution, expressed in root vasculature, root hairs, leaves, trichomes, sepals, stamens, stigma, pedicels, siliques and embryo.

The protein resides in the plastid. It is found in the chloroplast membrane. Its function is as follows. Required for neoxanthin biosynthesis, an intermediary step in abscisic acid (ABA) biosynthesis. Probably not involved directly in the enzymatic conversion of violaxanthin to neoxanthin. Cannot convert violaxanthin to neoxanthin in vitro. Required for ABA biosynthesis in response to drought stress. Required for neoxanthin biosynthesis which is involved in photoprotection of photosystem II (PSII). Neoxanthin acts as an antioxidant within the photosystem PSII supercomplex. The polypeptide is Protein ABA DEFICIENT 4, chloroplastic (Arabidopsis thaliana (Mouse-ear cress)).